A 134-amino-acid chain; its full sequence is Protein Turandot E (134 aa).

Residues 1–38 (MSYTRTVHSSTSILKMNSALQISCLLVVLGCLLGSGHC) form the signal peptide.

Belongs to the Turandot family.

Its subcellular location is the secreted. Its function is as follows. A humoral factor that may play a role in stress tolerance. The chain is Protein Turandot E from Drosophila simulans (Fruit fly).